A 485-amino-acid polypeptide reads, in one-letter code: Cysteine--tRNA ligase (485 aa).

Cys-27 lines the Zn(2+) pocket. The 'HIGH' region motif lies at 29-39 (ITAYDFSHIGH). Zn(2+)-binding residues include Cys-208, His-233, and Glu-237. The 'KMSKS' region signature appears at 265–269 (KMSKS). An ATP-binding site is contributed by Lys-268.

This sequence belongs to the class-I aminoacyl-tRNA synthetase family. As to quaternary structure, monomer. Zn(2+) serves as cofactor.

It localises to the cytoplasm. The catalysed reaction is tRNA(Cys) + L-cysteine + ATP = L-cysteinyl-tRNA(Cys) + AMP + diphosphate. In Lawsonia intracellularis (strain PHE/MN1-00), this protein is Cysteine--tRNA ligase.